Reading from the N-terminus, the 163-residue chain is Phosphopantetheine adenylyltransferase (163 aa).

T10 provides a ligand contact to substrate. Residues 10–11 and H18 each bind ATP; that span reads TF. Substrate-binding residues include K42, L74, and R88. Residues 89–91, E99, and 124–130 contribute to the ATP site; these read GLR and NSFISST.

The protein belongs to the bacterial CoaD family. As to quaternary structure, homohexamer. It depends on Mg(2+) as a cofactor.

Its subcellular location is the cytoplasm. The catalysed reaction is (R)-4'-phosphopantetheine + ATP + H(+) = 3'-dephospho-CoA + diphosphate. Its pathway is cofactor biosynthesis; coenzyme A biosynthesis; CoA from (R)-pantothenate: step 4/5. In terms of biological role, reversibly transfers an adenylyl group from ATP to 4'-phosphopantetheine, yielding dephospho-CoA (dPCoA) and pyrophosphate. The chain is Phosphopantetheine adenylyltransferase from Shewanella baltica (strain OS155 / ATCC BAA-1091).